We begin with the raw amino-acid sequence, 418 residues long: Gamma-glutamyl phosphate reductase (418 aa).

The protein belongs to the gamma-glutamyl phosphate reductase family.

Its subcellular location is the cytoplasm. The enzyme catalyses L-glutamate 5-semialdehyde + phosphate + NADP(+) = L-glutamyl 5-phosphate + NADPH + H(+). The protein operates within amino-acid biosynthesis; L-proline biosynthesis; L-glutamate 5-semialdehyde from L-glutamate: step 2/2. Its function is as follows. Catalyzes the NADPH-dependent reduction of L-glutamate 5-phosphate into L-glutamate 5-semialdehyde and phosphate. The product spontaneously undergoes cyclization to form 1-pyrroline-5-carboxylate. The polypeptide is Gamma-glutamyl phosphate reductase (Pelobacter propionicus (strain DSM 2379 / NBRC 103807 / OttBd1)).